The chain runs to 90 residues: Barstar (90 aa).

It belongs to the barstar family.

Its subcellular location is the cytoplasm. Its function is as follows. Inhibitor of the ribonuclease barnase. Forms a one-to-one non-covalent complex. The protein is Barstar of Bacillus amyloliquefaciens (Bacillus velezensis).